Reading from the N-terminus, the 419-residue chain is Hydrolase LUC6 (419 aa).

Residue serine 238 is part of the active site.

This sequence belongs to the AB hydrolase superfamily. FUS2 hydrolase family.

Its pathway is mycotoxin biosynthesis. Hydrolase; part of the gene cluster that mediates the biosynthesis of the mycotoxin lucilactaene and the lucilactaene-related compound NG-391 that act as cell cycle inhibitors with potent growth inhibitory activity against malarial parasites, moderate growth inhibitory activity against cancer cells, and no activity against bacteria and fungi. Within the pathway, LUC6 may catalyze the 2-pyrrolidone ring formation to form prelucilactaene C from prelucilactaene B, followed by C-15 hydroxylation by the same enzyme to give prelucilactaene D, epoxydation to yield prelucilactaene E, and finally cyclization to yield prelucilactaene F. The pathway begins with the hybrid PKS-NRPS synthetase LUC5 which is responsible for the condensation of one acetyl-coenzyme A (CoA) unit with six malonyl-CoA units and the amide linkage of the arising heptaketide and homoserine, subsequently releasing the first intermediate prelucilactaene B. Both the cytochrome P450 monooxygenase LUC2 and the hydrolase LUC6 function in parallel in modification of prelucilactaene B. LUC6 may catalyze the 2-pyrrolidone ring formation to form prelucilactaene C from prelucilactaene B, followed by C-15 hydroxylation by the same enzyme to give prelucilactaene D, which is then converted to prelucilactaene E by epoxidation, and finally to prelucilactaene F by cyclization. Prelucilactane D, prelucilactaene E, and prelucilactaene F can be converted to dihydrolucilactaene, NG391, and lucilactaene, respectively, via C-20 methyl group hydroxylation by the cytochrome P450 monooxygenase LUC2. However, LUC2, unlike FUS8 in fusarin C biosynthesis, is not enough for the full oxidation of the C-20 methyl group into carboxylic acid, which is a prerequisite for the final methylation step. The aldehyde dehydrogenase LUC3 is involved in the biosynthesis by further oxidation of the C-20 alcoholic analog prelucilactaene G into a carboxylic derivative. This unidentified carboxylic derivative may be converted to demethyllucilactaene. As the last step, the methyltransferase LUC1 methylates the hydroxyl group at C-21 of demethyllucilactaene to generate lucilactaene. This chain is Hydrolase LUC6, found in Fusarium sp.